The following is a 316-amino-acid chain: 4-diphosphocytidyl-2-C-methyl-D-erythritol kinase (316 aa).

The active site involves K32. Position 126–136 (126–136 (PVGAGLGGGSA)) interacts with ATP. The active site involves D168.

Belongs to the GHMP kinase family. IspE subfamily.

It catalyses the reaction 4-CDP-2-C-methyl-D-erythritol + ATP = 4-CDP-2-C-methyl-D-erythritol 2-phosphate + ADP + H(+). It functions in the pathway isoprenoid biosynthesis; isopentenyl diphosphate biosynthesis via DXP pathway; isopentenyl diphosphate from 1-deoxy-D-xylulose 5-phosphate: step 3/6. Its function is as follows. Catalyzes the phosphorylation of the position 2 hydroxy group of 4-diphosphocytidyl-2C-methyl-D-erythritol. The chain is 4-diphosphocytidyl-2-C-methyl-D-erythritol kinase from Bifidobacterium longum (strain DJO10A).